A 437-amino-acid chain; its full sequence is Glucose-1-phosphate adenylyltransferase (437 aa).

Residues Y113, G179, 194-195, and S212 each bind alpha-D-glucose 1-phosphate; that span reads EK.

It belongs to the bacterial/plant glucose-1-phosphate adenylyltransferase family. In terms of assembly, homotetramer.

The catalysed reaction is alpha-D-glucose 1-phosphate + ATP + H(+) = ADP-alpha-D-glucose + diphosphate. It participates in glycan biosynthesis; glycogen biosynthesis. In terms of biological role, involved in the biosynthesis of ADP-glucose, a building block required for the elongation reactions to produce glycogen. Catalyzes the reaction between ATP and alpha-D-glucose 1-phosphate (G1P) to produce pyrophosphate and ADP-Glc. This chain is Glucose-1-phosphate adenylyltransferase, found in Haemophilus influenzae (strain 86-028NP).